The primary structure comprises 316 residues: 4-hydroxy-3-methylbut-2-enyl diphosphate reductase (316 aa).

Residue C12 coordinates [4Fe-4S] cluster. Residues H41 and H74 each contribute to the (2E)-4-hydroxy-3-methylbut-2-enyl diphosphate site. 2 residues coordinate dimethylallyl diphosphate: H41 and H74. Isopentenyl diphosphate is bound by residues H41 and H74. C96 provides a ligand contact to [4Fe-4S] cluster. H124 provides a ligand contact to (2E)-4-hydroxy-3-methylbut-2-enyl diphosphate. H124 lines the dimethylallyl diphosphate pocket. H124 serves as a coordination point for isopentenyl diphosphate. E126 (proton donor) is an active-site residue. T169 is a (2E)-4-hydroxy-3-methylbut-2-enyl diphosphate binding site. Position 199 (C199) interacts with [4Fe-4S] cluster. 4 residues coordinate (2E)-4-hydroxy-3-methylbut-2-enyl diphosphate: S227, S228, N229, and S271. Residues S227, S228, N229, and S271 each contribute to the dimethylallyl diphosphate site. Isopentenyl diphosphate-binding residues include S227, S228, N229, and S271.

Belongs to the IspH family. Requires [4Fe-4S] cluster as cofactor.

The catalysed reaction is isopentenyl diphosphate + 2 oxidized [2Fe-2S]-[ferredoxin] + H2O = (2E)-4-hydroxy-3-methylbut-2-enyl diphosphate + 2 reduced [2Fe-2S]-[ferredoxin] + 2 H(+). It carries out the reaction dimethylallyl diphosphate + 2 oxidized [2Fe-2S]-[ferredoxin] + H2O = (2E)-4-hydroxy-3-methylbut-2-enyl diphosphate + 2 reduced [2Fe-2S]-[ferredoxin] + 2 H(+). It participates in isoprenoid biosynthesis; dimethylallyl diphosphate biosynthesis; dimethylallyl diphosphate from (2E)-4-hydroxy-3-methylbutenyl diphosphate: step 1/1. The protein operates within isoprenoid biosynthesis; isopentenyl diphosphate biosynthesis via DXP pathway; isopentenyl diphosphate from 1-deoxy-D-xylulose 5-phosphate: step 6/6. Its function is as follows. Catalyzes the conversion of 1-hydroxy-2-methyl-2-(E)-butenyl 4-diphosphate (HMBPP) into a mixture of isopentenyl diphosphate (IPP) and dimethylallyl diphosphate (DMAPP). Acts in the terminal step of the DOXP/MEP pathway for isoprenoid precursor biosynthesis. The protein is 4-hydroxy-3-methylbut-2-enyl diphosphate reductase of Xanthomonas campestris pv. campestris (strain ATCC 33913 / DSM 3586 / NCPPB 528 / LMG 568 / P 25).